Here is a 238-residue protein sequence, read N- to C-terminus: Pyruvate formate-lyase-activating enzyme (238 aa).

The Radical SAM core domain occupies 15–236; the sequence is VDGPGIRTVV…KKLEKYLKEL (222 aa). The [4Fe-4S] cluster site is built by C29, C33, and C36. S-adenosyl-L-methionine is bound by residues 35–37, G78, 126–128, and H199; these read YCH and DIK.

Belongs to the organic radical-activating enzymes family. Requires [4Fe-4S] cluster as cofactor.

Its subcellular location is the cytoplasm. The enzyme catalyses glycyl-[formate C-acetyltransferase] + reduced [flavodoxin] + S-adenosyl-L-methionine = glycin-2-yl radical-[formate C-acetyltransferase] + semiquinone [flavodoxin] + 5'-deoxyadenosine + L-methionine + H(+). Functionally, activation of pyruvate formate-lyase under anaerobic conditions by generation of an organic free radical, using S-adenosylmethionine and reduced flavodoxin as cosubstrates to produce 5'-deoxy-adenosine. The chain is Pyruvate formate-lyase-activating enzyme (act) from Clostridium pasteurianum.